The following is a 170-amino-acid chain: Transcription factor E (170 aa).

The HTH TFE/IIEalpha-type domain maps to 1-93 (MKEAYLYIVE…TWYVDDDVIR (93 aa)).

It belongs to the TFE family. In terms of assembly, monomer. Interaction with RNA polymerase subunits RpoF and RpoE is necessary for Tfe stimulatory transcription activity. Able to interact with Tbp and RNA polymerase in the absence of DNA promoter. Interacts both with the preinitiation and elongation complexes.

Its function is as follows. Transcription factor that plays a role in the activation of archaeal genes transcribed by RNA polymerase. Facilitates transcription initiation by enhancing TATA-box recognition by TATA-box-binding protein (Tbp), and transcription factor B (Tfb) and RNA polymerase recruitment. Not absolutely required for transcription in vitro, but particularly important in cases where Tbp or Tfb function is not optimal. It dynamically alters the nucleic acid-binding properties of RNA polymerases by stabilizing the initiation complex and destabilizing elongation complexes. Seems to translocate with the RNA polymerase following initiation and acts by binding to the non template strand of the transcription bubble in elongation complexes. The polypeptide is Transcription factor E (Pyrobaculum neutrophilum (strain DSM 2338 / JCM 9278 / NBRC 100436 / V24Sta) (Thermoproteus neutrophilus)).